Consider the following 217-residue polypeptide: Glutathione S-transferase (217 aa).

A GST N-terminal domain is found at 2-82 (TIKVHGNPRS…YLAYTHDHQN (81 aa)). Glutathione is bound by residues Ser-11, 40 to 41 (HK), 53 to 54 (QV), and 66 to 67 (ES). The 127-residue stretch at 91-217 (EKHEMAAQLV…EKTLALQKQA (127 aa)) folds into the GST C-terminal domain.

The protein belongs to the GST superfamily. Phi family.

The protein localises to the cytoplasm. It carries out the reaction RX + glutathione = an S-substituted glutathione + a halide anion + H(+). Functionally, conjugation of reduced glutathione to a wide number of exogenous and endogenous hydrophobic electrophiles. The polypeptide is Glutathione S-transferase (GST) (Silene vulgaris (Bladder campion)).